The primary structure comprises 334 residues: D-aspartate oxidase 1 (334 aa).

Positions 35, 36, 43, 307, and 312 each coordinate FAD. The Microbody targeting signal motif lies at 332–334 (SKL).

It belongs to the DAMOX/DASOX family. Requires FAD as cofactor. Expressed in the intestinal cells, hypodermis and in unidentified cells in the head in adult hermaphrodites.

The protein localises to the peroxisome matrix. The enzyme catalyses D-aspartate + O2 + H2O = oxaloacetate + H2O2 + NH4(+). The catalysed reaction is D-glutamate + O2 + H2O = H2O2 + 2-oxoglutarate + NH4(+). With respect to regulation, not inhibited by potassium bromide or thiolactomycin. Its function is as follows. Selectively catalyzes the oxidative deamination of acidic amino acids. May play a role in the egg-laying events and early development of the worm, in addition to quality control of the germ cells. This Caenorhabditis elegans protein is D-aspartate oxidase 1 (ddo-1).